Consider the following 124-residue polypeptide: MPTIQQLIRTERSRLKVKTKSPALKSCPERRGVCTRVYTSTPKKPNSALRKVARVRLTSGFEVTAYIGGIGHNLQEHSVVLIRGGRVKDLPGVRYHIIRGTLDTSGVKDRRQSRSKYGAKAPKE.

Aspartate 89 is subject to 3-methylthioaspartic acid. Residues 101–124 (TLDTSGVKDRRQSRSKYGAKAPKE) are disordered.

This sequence belongs to the universal ribosomal protein uS12 family. In terms of assembly, part of the 30S ribosomal subunit. Contacts proteins S8 and S17. May interact with IF1 in the 30S initiation complex.

Functionally, with S4 and S5 plays an important role in translational accuracy. In terms of biological role, interacts with and stabilizes bases of the 16S rRNA that are involved in tRNA selection in the A site and with the mRNA backbone. Located at the interface of the 30S and 50S subunits, it traverses the body of the 30S subunit contacting proteins on the other side and probably holding the rRNA structure together. The combined cluster of proteins S8, S12 and S17 appears to hold together the shoulder and platform of the 30S subunit. The chain is Small ribosomal subunit protein uS12 from Synechococcus sp. (strain CC9902).